Here is a 102-residue protein sequence, read N- to C-terminus: Protamine-2 (102 aa).

2 disordered regions span residues 1–40 and 67–102; these read MVRY…SPEH and HRQQ…CRRH. Ser-8, Ser-10, and Ser-37 each carry phosphoserine.

The protein belongs to the protamine P2 family. Interacts with TDRP. Post-translationally, proteolytic processing into mature chains is required for histone eviction during spermatogenesis. Transition proteins (TNP1 and TNP2) are required for processing. As to expression, testis.

It is found in the nucleus. The protein localises to the chromosome. Protamines substitute for histones in the chromatin of sperm during the haploid phase of spermatogenesis. They compact sperm DNA into a highly condensed, stable and inactive complex. The chain is Protamine-2 (PRM2) from Pan troglodytes (Chimpanzee).